We begin with the raw amino-acid sequence, 229 residues long: Protein-L-isoaspartate O-methyltransferase (229 aa).

The active site involves Ser-78.

It belongs to the methyltransferase superfamily. L-isoaspartyl/D-aspartyl protein methyltransferase family.

The protein resides in the cytoplasm. It catalyses the reaction [protein]-L-isoaspartate + S-adenosyl-L-methionine = [protein]-L-isoaspartate alpha-methyl ester + S-adenosyl-L-homocysteine. Catalyzes the methyl esterification of L-isoaspartyl residues in peptides and proteins that result from spontaneous decomposition of normal L-aspartyl and L-asparaginyl residues. It plays a role in the repair and/or degradation of damaged proteins. In Chromohalobacter salexigens (strain ATCC BAA-138 / DSM 3043 / CIP 106854 / NCIMB 13768 / 1H11), this protein is Protein-L-isoaspartate O-methyltransferase.